The following is a 263-amino-acid chain: Very long chain fatty acid elongase F (263 aa).

Transmembrane regions (helical) follow at residues 10-30, 55-75, 98-118, 135-155, 159-179, 193-213, and 223-243; these read IPVFSDPWITMATLSGYLLFV, IFQILYNGLILVLGVHFLFVL, LICILYMLNKFVDLVETIFFV, FAMAFLGYLYYYFHGYGGVAF, LCLLNTAVHVIMYAYYYLSSI, ITIAQLVQFGIILLHCTITLA, and LTYGCGSLSAFFAVIFSQFYY.

This sequence belongs to the ELO family. In terms of tissue distribution, no expression in adults.

The protein resides in the endoplasmic reticulum membrane. The enzyme catalyses a very-long-chain acyl-CoA + malonyl-CoA + H(+) = a very-long-chain 3-oxoacyl-CoA + CO2 + CoA. In terms of biological role, condensing enzyme that elongates saturated and monounsaturated very long chain fatty acids, to yield products up to 30 carbons in length. The chain is Very long chain fatty acid elongase F from Drosophila simulans (Fruit fly).